Reading from the N-terminus, the 374-residue chain is Flap endonuclease 1 (374 aa).

An N-domain region spans residues 1-105 (MGVKGLNKLI…GELEKRLLRR (105 aa)). Aspartate 34 serves as a coordination point for Mg(2+). DNA is bound by residues arginine 47 and arginine 71. Positions 87, 159, 161, 180, and 182 each coordinate Mg(2+). Positions 123–254 (DHLKFEKRLV…VTAYKLIKEH (132 aa)) are I-domain. Glutamate 159 provides a ligand contact to DNA. The DNA site is built by glycine 232 and aspartate 234. Aspartate 234 lines the Mg(2+) pocket. The interval 339–347 (VQGRLDSFF) is interaction with PCNA. The tract at residues 353–374 (DDGKDKKRKSTAKDTKSKKQKK) is disordered.

The protein belongs to the XPG/RAD2 endonuclease family. FEN1 subfamily. Interacts with PCNA. Three molecules of RAD27 bind to one PCNA trimer with each molecule binding to one PCNA monomer. PCNA stimulates the nuclease activity without altering cleavage specificity. The cofactor is Mg(2+). Post-translationally, phosphorylated. Phosphorylation upon DNA damage induces relocalization to the nuclear plasma.

It localises to the nucleus. The protein resides in the nucleolus. It is found in the nucleoplasm. The protein localises to the mitochondrion. Structure-specific nuclease with 5'-flap endonuclease and 5'-3' exonuclease activities involved in DNA replication and repair. During DNA replication, cleaves the 5'-overhanging flap structure that is generated by displacement synthesis when DNA polymerase encounters the 5'-end of a downstream Okazaki fragment. It enters the flap from the 5'-end and then tracks to cleave the flap base, leaving a nick for ligation. Also involved in the long patch base excision repair (LP-BER) pathway, by cleaving within the apurinic/apyrimidinic (AP) site-terminated flap. Acts as a genome stabilization factor that prevents flaps from equilibrating into structures that lead to duplications and deletions. Also possesses 5'-3' exonuclease activity on nicked or gapped double-stranded DNA, and exhibits RNase H activity. Also involved in replication and repair of rDNA and in repairing mitochondrial DNA. The chain is Flap endonuclease 1 from Candida tropicalis (strain ATCC MYA-3404 / T1) (Yeast).